A 706-amino-acid polypeptide reads, in one-letter code: ATP-dependent zinc metalloprotease FtsH (706 aa).

Residues methionine 1–glutamate 17 show a composition bias toward polar residues. Residues methionine 1–glutamine 20 form a disordered region. At methionine 1–lysine 24 the chain is on the cytoplasmic side. A helical transmembrane segment spans residues leucine 25–phenylalanine 45. Residues tryptophan 46 to tryptophan 142 lie on the Periplasmic side of the membrane. The interval glycine 88–asparagine 111 is disordered. Over residues lysine 91–arginine 100 the composition is skewed to basic and acidic residues. Residues isoleucine 143–isoleucine 163 form a helical membrane-spanning segment. The Cytoplasmic portion of the chain corresponds to phenylalanine 164–asparagine 706. Residue glycine 239 to threonine 246 coordinates ATP. Histidine 462 contacts Zn(2+). Glutamate 463 is an active-site residue. 2 residues coordinate Zn(2+): histidine 466 and aspartate 539. The interval arginine 641–glycine 681 is disordered.

It in the central section; belongs to the AAA ATPase family. In the C-terminal section; belongs to the peptidase M41 family. In terms of assembly, homohexamer. It depends on Zn(2+) as a cofactor.

It is found in the cell inner membrane. Acts as a processive, ATP-dependent zinc metallopeptidase for both cytoplasmic and membrane proteins. Plays a role in the quality control of integral membrane proteins. The protein is ATP-dependent zinc metalloprotease FtsH of Chlorobium luteolum (strain DSM 273 / BCRC 81028 / 2530) (Pelodictyon luteolum).